The following is a 319-amino-acid chain: Taste receptor type 2 member 30 (319 aa).

A topological domain (extracellular) is located at residue Met-1. Residues 2-22 (ITFLPIIFSILIVVIFVIGNF) traverse the membrane as a helical segment. The Cytoplasmic segment spans residues 23-46 (ANGFIALVNSIEWVKRQKISFVDQ). A helical transmembrane segment spans residues 47 to 67 (ILTALAVSRVGLLWVLLLHWY). Residues 68–86 (ATQLNPAFYSVEVRITAYN) lie on the Extracellular side of the membrane. Residues 87-107 (VWAVTNHFSSWLATSLSMFYL) form a helical membrane-spanning segment. Residues 108–126 (LRIANFSNLIFLRIKRRVK) lie on the Cytoplasmic side of the membrane. The helical transmembrane segment at 127-147 (SVVLVILLGPLLFLVCHLFVI) threads the bilayer. Residues 148–178 (NMDETVWTKEYEGNVTWKIKLRSAMYHSNMT) are Extracellular-facing. Asn-161 and Asn-176 each carry an N-linked (GlcNAc...) asparagine glycan. The chain crosses the membrane as a helical span at residues 179 to 199 (LTMLANFVPLTLTLISFLLLI). Residues 200–229 (CSLCKHLKKMQLHGKGSQDPSTKVHIKALQ) lie on the Cytoplasmic side of the membrane. Residues 230 to 250 (TVTSFLLLCAIYFLSMIISVC) traverse the membrane as a helical segment. The Extracellular portion of the chain corresponds to 251–259 (NFGRLEKQP). The helical transmembrane segment at 260-280 (VFMFCQAIIFSYPSTHPFILI) threads the bilayer. Residues 281 to 319 (LGNKKLKQIFLSVLRHVRYWVKDRSLRLHRFTRGALCVF) lie on the Cytoplasmic side of the membrane.

It belongs to the G-protein coupled receptor T2R family. In terms of tissue distribution, expressed in subsets of taste receptor cells of the tongue and exclusively in gustducin-positive cells.

It localises to the membrane. Functionally, receptor that may play a role in the perception of bitterness and is gustducin-linked. May play a role in sensing the chemical composition of the gastrointestinal content. The activity of this receptor may stimulate alpha gustducin, mediate PLC-beta-2 activation and lead to the gating of TRPM5. The protein is Taste receptor type 2 member 30 (TAS2R30) of Homo sapiens (Human).